We begin with the raw amino-acid sequence, 441 residues long: Proline--tRNA ligase (441 aa).

The protein belongs to the class-II aminoacyl-tRNA synthetase family. ProS type 2 subfamily. Homodimer.

The protein resides in the cytoplasm. It catalyses the reaction tRNA(Pro) + L-proline + ATP = L-prolyl-tRNA(Pro) + AMP + diphosphate. Its function is as follows. Catalyzes the attachment of proline to tRNA(Pro) in a two-step reaction: proline is first activated by ATP to form Pro-AMP and then transferred to the acceptor end of tRNA(Pro). The chain is Proline--tRNA ligase from Bartonella henselae (strain ATCC 49882 / DSM 28221 / CCUG 30454 / Houston 1) (Rochalimaea henselae).